The sequence spans 289 residues: ATP synthase subunit a (289 aa).

Transmembrane regions (helical) follow at residues 41-61, 101-121, 129-149, 166-186, 189-209, 222-242, and 244-264; these read KATALTIFAALFVGVIFWLGF, YLLVLFSFVLVSNVLAIIPAA, IAVPMVLAVVTWVMFIYAGIK, TAPLAIRLLLGPIEILSTLIV, FTLAIRLFANMFAGHLLLLVF, FVFGVASLLVAIVLTAFELVI, and ALQAYIITILTAAYIGGAMAH.

It belongs to the ATPase A chain family. As to quaternary structure, F-type ATPases have 2 components, CF(1) - the catalytic core - and CF(0) - the membrane proton channel. CF(1) has five subunits: alpha(3), beta(3), gamma(1), delta(1), epsilon(1). CF(0) has three main subunits: a(1), b(2) and c(9-12). The alpha and beta chains form an alternating ring which encloses part of the gamma chain. CF(1) is attached to CF(0) by a central stalk formed by the gamma and epsilon chains, while a peripheral stalk is formed by the delta and b chains.

It localises to the cell membrane. In terms of biological role, key component of the proton channel; it plays a direct role in the translocation of protons across the membrane. This is ATP synthase subunit a from Frankia alni (strain DSM 45986 / CECT 9034 / ACN14a).